The chain runs to 81 residues: MMKLMLFSIIVILFSLIGSIHGADVPGNYPLDSSDDTYLCAPLGENPFCIKICRKHGVKYGLMLRLPCWCEYFGKIKNVKI.

Residues 1-22 form the signal peptide; the sequence is MMKLMLFSIIVILFSLIGSIHG. Positions 25-81 constitute an LCN-type CS-alpha/beta domain; the sequence is VPGNYPLDSSDDTYLCAPLGENPFCIKICRKHGVKYGLMLRLPCWCEYFGKIKNVKI. Cystine bridges form between Cys49–Cys68 and Cys53–Cys70.

It belongs to the long (3 C-C) scorpion toxin superfamily. In terms of tissue distribution, expressed by the venom gland.

The protein resides in the secreted. Probable neurotoxin that inhibits ion channels. This Androctonus australis (Sahara scorpion) protein is Toxin-like peptide AaF1CA5.